Consider the following 298-residue polypeptide: N-acetylmuramic acid 6-phosphate etherase (298 aa).

An SIS domain is found at 55-218 (IHAQVSGGGR…STGLMIKSGK (164 aa)). The active-site Proton donor is the Glu83. The active site involves Glu114.

The protein belongs to the GCKR-like family. MurNAc-6-P etherase subfamily. Homodimer.

The enzyme catalyses N-acetyl-D-muramate 6-phosphate + H2O = N-acetyl-D-glucosamine 6-phosphate + (R)-lactate. Its pathway is amino-sugar metabolism; 1,6-anhydro-N-acetylmuramate degradation. It participates in amino-sugar metabolism; N-acetylmuramate degradation. It functions in the pathway cell wall biogenesis; peptidoglycan recycling. Functionally, specifically catalyzes the cleavage of the D-lactyl ether substituent of MurNAc 6-phosphate, producing GlcNAc 6-phosphate and D-lactate. Together with AnmK, is also required for the utilization of anhydro-N-acetylmuramic acid (anhMurNAc) either imported from the medium or derived from its own cell wall murein, and thus plays a role in cell wall recycling. The protein is N-acetylmuramic acid 6-phosphate etherase of Shigella dysenteriae serotype 1 (strain Sd197).